The following is a 360-amino-acid chain: Phospho-N-acetylmuramoyl-pentapeptide-transferase (360 aa).

The next 10 membrane-spanning stretches (helical) occupy residues 25 to 45, 73 to 93, 97 to 117, 132 to 152, 168 to 188, 199 to 219, 236 to 256, 263 to 283, 288 to 308, and 339 to 359; these read RAIL…PWVI, TMGG…WADL, YVLA…VDDY, WKYF…FVTA, VAWQ…VGFS, GLAI…AYLV, SGEL…FLWF, VFMG…IAVI, IVFF…ILQV, and IVRF…TLKI.

The protein belongs to the glycosyltransferase 4 family. MraY subfamily. Mg(2+) is required as a cofactor.

The protein localises to the cell inner membrane. The enzyme catalyses UDP-N-acetyl-alpha-D-muramoyl-L-alanyl-gamma-D-glutamyl-meso-2,6-diaminopimeloyl-D-alanyl-D-alanine + di-trans,octa-cis-undecaprenyl phosphate = di-trans,octa-cis-undecaprenyl diphospho-N-acetyl-alpha-D-muramoyl-L-alanyl-D-glutamyl-meso-2,6-diaminopimeloyl-D-alanyl-D-alanine + UMP. The protein operates within cell wall biogenesis; peptidoglycan biosynthesis. Functionally, catalyzes the initial step of the lipid cycle reactions in the biosynthesis of the cell wall peptidoglycan: transfers peptidoglycan precursor phospho-MurNAc-pentapeptide from UDP-MurNAc-pentapeptide onto the lipid carrier undecaprenyl phosphate, yielding undecaprenyl-pyrophosphoryl-MurNAc-pentapeptide, known as lipid I. The chain is Phospho-N-acetylmuramoyl-pentapeptide-transferase from Teredinibacter turnerae (strain ATCC 39867 / T7901).